Reading from the N-terminus, the 705-residue chain is Elongation factor G (705 aa).

One can recognise a tr-type G domain in the interval 8-290 (EKYRNIGICA…GVVEYLPAPN (283 aa)). GTP-binding positions include 17 to 24 (AHVDAGKT), 88 to 92 (DTPGH), and 142 to 145 (NKMD).

The protein belongs to the TRAFAC class translation factor GTPase superfamily. Classic translation factor GTPase family. EF-G/EF-2 subfamily.

It localises to the cytoplasm. Its function is as follows. Catalyzes the GTP-dependent ribosomal translocation step during translation elongation. During this step, the ribosome changes from the pre-translocational (PRE) to the post-translocational (POST) state as the newly formed A-site-bound peptidyl-tRNA and P-site-bound deacylated tRNA move to the P and E sites, respectively. Catalyzes the coordinated movement of the two tRNA molecules, the mRNA and conformational changes in the ribosome. The chain is Elongation factor G from Francisella philomiragia subsp. philomiragia (strain ATCC 25017 / CCUG 19701 / FSC 153 / O#319-036).